The chain runs to 677 residues: MLTSPRLILLLLAWVFSALVASALVKKDWTITWEPGAPNGQERNMIKINNQFPGPTILCDEDDDIEVTVHNKMPFNTTVHWHGLERVNCVRMMGTPWSDGTPGMSQKPIEMGQSFIYRFKASPAGTHWYHSHSRATVLDGLYGPIFIRRKPDAPAPWHLISKEQADIDAMSRAVIDPKLVMVSDWTRFMSWEYMAAEESSGMAIFCSDSILVNGKGSLYCPDVDVLINHTSTYMKYGLYPRQVNDKGCFPFMRSTQGPYLTTGKPETIPLHLQHGCTPAEGTNETIEVDPADQWASLNFIGGATFKTIVFSVDEHDMWVYEVDGHYIVPQRVNTVHMYAGERYAVMIKLDKTPKDYTIRVADSGLTQVISAFATLRYKGGIQGSDSVGVIDYGGQNSTKDGSVITLDREHLPPYPPNPPARKADAMHVLSTHRWKSAWQYTMSGHGMYEEDRSAYGPLLYDPHSADAMDEGLVIRTKNGSWVDLVLQVGSLPGQPQEFPHMMHKHTGKTWQIGSGMGIWNYSSVEEAIAAEPHNFDLDTPKWRDTFVTSFDGSAWIVLRYQVTNPGPWLFHCHIETHLAGGMAIAILDGIDVWPQIPAEYGPDQRGFMPGTLPELESGGKQGTVDKQCPLLAVSPSGGPKKDSGETSASDSRWETLIRGLIQVLQGWLSDEASSRSS.

An N-terminal signal peptide occupies residues 1 to 23 (MLTSPRLILLLLAWVFSALVASA). Plastocyanin-like domains follow at residues 31-150 (ITWE…IRRK) and 179-379 (LVMV…RYKG). The N-linked (GlcNAc...) asparagine glycan is linked to Asn76. The Cu cation site is built by His80, His82, His130, and His132. Residues Asn228, Asn283, Asn396, and Asn478 are each glycosylated (N-linked (GlcNAc...) asparagine). Residues 469 to 588 (DEGLVIRTKN…AGGMAIAILD (120 aa)) form the Plastocyanin-like 3 domain. Position 503 (His503) interacts with Cu cation. N-linked (GlcNAc...) asparagine glycosylation is present at Asn520. The tract at residues 629-651 (PLLAVSPSGGPKKDSGETSASDS) is disordered.

It belongs to the multicopper oxidase family. Might be part of an extracellular enzyme complex composed of GIP1, aurF, aurO and aurS.

The protein localises to the secreted. It localises to the extracellular space. It participates in pigment biosynthesis. Functionally, multicopper oxidase; part of the gene cluster that mediates the biosynthesis of aurofusarin, a red mycelium pigment which is acting as a mycotoxin. The first step is performed by the polyketide synthase which condenses one acetyl-CoA and 6 malonyl-CoA units to form the first intermediate, the cyclic heptaketide and yellow pigment YWA1. The C2 hydroxyl group in the pyrone ring of YWA1 is probably formed during ring closure by an aldol-type cyclization reaction. The dehydratase aurZ then acts as the first tailoring enzyme in the aurofusarin biosynthetic pathway by converting YWA1 to nor-rubrofusarin. Nor-rubrofusarin is then methylated to rubrofusarin by the O-methyltransferase aurJ. Rubrofusarin is then transported across the plasma membrane by the rubrofusarin-specific pump aurT for further enzymatic processing by the extracellular complex composed of GIP1, aurF, aurO and aurS to yield aurofusarin. The sequence is that of Multicopper oxidase GIP1 from Gibberella zeae (strain ATCC MYA-4620 / CBS 123657 / FGSC 9075 / NRRL 31084 / PH-1) (Wheat head blight fungus).